A 265-amino-acid chain; its full sequence is Mlc titration factor A (265 aa).

4 residues coordinate Zn(2+): His111, His148, His152, and Glu211.

Belongs to the MtfA family. In terms of assembly, interacts with Mlc. The cofactor is Zn(2+).

It localises to the cytoplasm. In terms of biological role, involved in the modulation of the activity of the glucose-phosphotransferase system (glucose-PTS). Interacts with the transcriptional repressor Mlc, preventing its interaction with DNA and leading to the modulation of expression of genes regulated by Mlc, including ptsG, which encodes the PTS system glucose-specific EIICB component. Functionally, shows zinc-dependent metallopeptidase activity. This chain is Mlc titration factor A, found in Escherichia coli O8 (strain IAI1).